Reading from the N-terminus, the 593-residue chain is La-related protein 7 (593 aa).

Polar residues predominate over residues 1-11; sequence MTAIETDTPSN. The interval 1–28 is disordered; it reads MTAIETDTPSNKVKEDESTDLRKDREKK. A compositionally biased stretch (basic and acidic residues) spans 12–24; sequence KVKEDESTDLRKD. The HTH La-type RNA-binding domain maps to 30-121; the sequence is RSRVKQLLAD…RRRFPLGEKP (92 aa). The region spanning 127-205 is the RRM domain; sequence RTVYVELLPK…PRKAGMFPKT (79 aa). The disordered stretch occupies residues 191–363; sequence PPEEAPRKAG…STEEEKDAVD (173 aa). Positions 231-240 are enriched in basic residues; that stretch reads KKKKKKKSKA. Residues 248 to 259 show a composition bias toward acidic residues; that stretch reads AEEDTKEQDMDI. Composition is skewed to basic and acidic residues over residues 295-307, 314-340, and 348-363; these read ERAE…EKVR, SSSE…DEKP, and QECK…DAVD. Residues 461–574 enclose the xRRM domain; sequence QFVCGVIGKI…TEKLIAKAEK (114 aa).

Belongs to the LARP7 family. As to quaternary structure, core component of the 7SK RNP complex. Associates with box C/D small nucleolar ribonucleoprotein (snoRNP) complexes.

It is found in the nucleus. The protein resides in the nucleoplasm. RNA-binding protein that specifically binds distinct small nuclear RNA (snRNAs) and regulates their processing and function. Specifically binds the 7SK snRNA (7SK RNA) and acts as a core component of the 7SK ribonucleoprotein (RNP) complex, thereby acting as a negative regulator of transcription elongation by RNA polymerase II. The 7SK RNP complex sequesters the positive transcription elongation factor b (P-TEFb) in a large inactive 7SK RNP complex preventing RNA polymerase II phosphorylation and subsequent transcriptional elongation. The 7SK RNP complex also promotes snRNA gene transcription by RNA polymerase II via interaction with the little elongation complex (LEC). LARP7 specifically binds to the highly conserved 3'-terminal U-rich stretch of 7SK RNA; on stimulation, remains associated with 7SK RNA, whereas P-TEFb is released from the complex. LARP7 also acts as a regulator of mRNA splicing fidelity by promoting U6 snRNA processing. Specifically binds U6 snRNAs and associates with a subset of box C/D RNP complexes: promotes U6 snRNA 2'-O-methylation by facilitating U6 snRNA loading into box C/D RNP complexes. U6 snRNA 2'-O-methylation is required for mRNA splicing fidelity. The chain is La-related protein 7 from Xenopus tropicalis (Western clawed frog).